A 302-amino-acid polypeptide reads, in one-letter code: Aspartate carbamoyltransferase catalytic subunit (302 aa).

Positions 53 and 54 each coordinate carbamoyl phosphate. Lysine 82 contributes to the L-aspartate binding site. The carbamoyl phosphate site is built by arginine 103, histidine 131, and glutamine 134. L-aspartate contacts are provided by arginine 164 and arginine 223. The carbamoyl phosphate site is built by leucine 260 and proline 261.

The protein belongs to the aspartate/ornithine carbamoyltransferase superfamily. ATCase family. In terms of assembly, heterooligomer of catalytic and regulatory chains.

It catalyses the reaction carbamoyl phosphate + L-aspartate = N-carbamoyl-L-aspartate + phosphate + H(+). Its pathway is pyrimidine metabolism; UMP biosynthesis via de novo pathway; (S)-dihydroorotate from bicarbonate: step 2/3. Catalyzes the condensation of carbamoyl phosphate and aspartate to form carbamoyl aspartate and inorganic phosphate, the committed step in the de novo pyrimidine nucleotide biosynthesis pathway. The sequence is that of Aspartate carbamoyltransferase catalytic subunit from Methanococcus maripaludis (strain DSM 14266 / JCM 13030 / NBRC 101832 / S2 / LL).